The chain runs to 433 residues: Cell division protein FtsZ homolog 1, chloroplastic (433 aa).

The transit peptide at M1–C66 directs the protein to the chloroplast. Residue S67 is modified to N-acetylserine. GTP contacts are provided by residues G83–N87, G170–G172, E201, R205, and D249. Positions G399–F433 are disordered. A compositionally biased stretch (low complexity) spans Q414–F433.

This sequence belongs to the FtsZ family. In terms of assembly, aggregates to form a contractile ring-like structure; contraction of the ring was accompanied by an increase in the filament turnover rate. This aggregation is regulated in midchloroplast stroma by MIND1 (repressor) and MINE1 (promoter). Self-interacts and binds to FTSZ2-1 in heteromers to form two morphologically distinct types of filaments, termed type-I (smooth filaments) and type-II (rough filaments), in a GTP-dependent manner. Interacts with ARC3. Part of a complex made of ARC3, ARC6, FTSZ1 and FTSZ2. As to expression, in pollen grain, restricted to plastids of vegetative cells. Also present in pollen tubes plastids.

Its subcellular location is the plastid. The protein localises to the chloroplast stroma. It is found in the chloroplast thylakoid membrane. Its function is as follows. Exhibits GTPase activity. Component of the plastid division machinery that forms a contractile ring at the division site. Required for plastid division in a dose-dependent manner. Involved in epidermal plastids division in a MINE1-dependent manner. Involved in blue light-induced chloroplast movements. May regulate thylakoid development. In the vegetative shoot apex, at the shoot apical meristem (SAM), where the proplastid-to-chloroplast transition takes place, contributes equally with FTSZ2-1 in the L2 layer to plastid division. The chain is Cell division protein FtsZ homolog 1, chloroplastic from Arabidopsis thaliana (Mouse-ear cress).